The primary structure comprises 942 residues: Protein NLP1 (942 aa).

A compositionally biased stretch (pro residues) spans 1–11 (MEQKPSPPPPP). Disordered regions lie at residues 1–32 (MEQK…GDIA), 77–106 (TTPA…VSPA), 594–620 (VKEN…TKTE), 723–753 (FQLE…PSCS), and 759–778 (SLGC…APQL). Residues 21–32 (MGCGMGGTGDIA) show a composition bias toward gly residues. Residues 597 to 609 (NTCSSDPSNSNSD) are compositionally biased toward polar residues. An RWP-RK domain is found at 609–690 (DKAVEKRRTK…IDSVHGPEGT (82 aa)). The segment covering 743-753 (SGSNSISPSCS) has biased composition (low complexity). Over residues 765 to 774 (VPKTQQQHGS) the composition is skewed to polar residues. The PB1 domain occupies 844-927 (SLKIKAIYGE…QTVRILVNPS (84 aa)).

It localises to the nucleus. Its function is as follows. Probable transcription factor. The sequence is that of Protein NLP1 (NLP1) from Oryza sativa subsp. japonica (Rice).